We begin with the raw amino-acid sequence, 220 residues long: Deoxyribose-phosphate aldolase 1 (220 aa).

Aspartate 89 functions as the Proton donor/acceptor in the catalytic mechanism. Lysine 151 serves as the catalytic Schiff-base intermediate with acetaldehyde. Residue lysine 180 is the Proton donor/acceptor of the active site.

It belongs to the DeoC/FbaB aldolase family. DeoC type 1 subfamily.

The protein localises to the cytoplasm. It carries out the reaction 2-deoxy-D-ribose 5-phosphate = D-glyceraldehyde 3-phosphate + acetaldehyde. It participates in carbohydrate degradation; 2-deoxy-D-ribose 1-phosphate degradation; D-glyceraldehyde 3-phosphate and acetaldehyde from 2-deoxy-alpha-D-ribose 1-phosphate: step 2/2. Catalyzes a reversible aldol reaction between acetaldehyde and D-glyceraldehyde 3-phosphate to generate 2-deoxy-D-ribose 5-phosphate. This Staphylococcus aureus (strain MRSA252) protein is Deoxyribose-phosphate aldolase 1.